The primary structure comprises 484 residues: Glycogen synthase (484 aa).

Lys21 is an ADP-alpha-D-glucose binding site.

This sequence belongs to the glycosyltransferase 1 family. Bacterial/plant glycogen synthase subfamily.

It carries out the reaction [(1-&gt;4)-alpha-D-glucosyl](n) + ADP-alpha-D-glucose = [(1-&gt;4)-alpha-D-glucosyl](n+1) + ADP + H(+). Its pathway is glycan biosynthesis; glycogen biosynthesis. Its function is as follows. Synthesizes alpha-1,4-glucan chains using ADP-glucose. This is Glycogen synthase from Pseudomonas syringae pv. tomato (strain ATCC BAA-871 / DC3000).